Consider the following 417-residue polypeptide: Transmembrane protease serine 11G (417 aa).

Residues 1–22 (MYQPGILGRRKRVCKPWTVALT) lie on the Cytoplasmic side of the membrane. A helical; Signal-anchor for type II membrane protein membrane pass occupies residues 23-43 (TTAALLALAVLIGLLVYFLVY). The Extracellular portion of the chain corresponds to 44 to 417 (EEKTHYYQAS…RNWIKSKTNI (374 aa)). The region spanning 46-165 (KTHYYQASFW…PYLREMNAAQ (120 aa)) is the SEA domain. Positions 186–416 (IADGKPAGSN…YRNWIKSKTN (231 aa)) constitute a Peptidase S1 domain. A disulfide bridge links cysteine 211 with cysteine 227. Active-site charge relay system residues include histidine 226 and aspartate 271. Cystine bridges form between cysteine 336–cysteine 352 and cysteine 363–cysteine 392. Catalysis depends on serine 367, which acts as the Charge relay system.

Belongs to the peptidase S1 family. Highest expression in lung and tongue. Also expressed in brain, colon, heart and liver. Isoform 1 is the predominant form in tongue whereas both isoforms are expressed in similar amounts in lung. At the cellular level, expression is confined to epithelial cells within the cleft of the circumvallate papillae extending into the ducts of the minor salivary glands, the respiratory epithelium of the nasal cavity and tear gland ducts.

Its subcellular location is the membrane. The protein is Transmembrane protease serine 11G (Tmprss11g) of Rattus norvegicus (Rat).